The sequence spans 583 residues: ATP-dependent lipid A-core flippase (583 aa).

6 helical membrane passes run 32-52, 71-91, 115-135, 160-180, 259-279, and 286-306; these read VAFL…TGFL, LHLL…AGFI, LMSL…TSKL, ILGM…IFAV, SMVV…YAVG, and FAAF…LTSL. The ABC transmembrane type-1 domain occupies 34–312; the sequence is FLISIIALVT…LTSLNEELQV (279 aa). An ABC transporter domain is found at 344–580; it reads IVFENVTLQY…DGHYAKLYRK (237 aa). 378–385 is a binding site for ATP; it reads GRSGGGKT.

This sequence belongs to the ABC transporter superfamily. Lipid exporter (TC 3.A.1.106) family. As to quaternary structure, homodimer.

The protein resides in the cell inner membrane. It carries out the reaction ATP + H2O + lipid A-core oligosaccharideSide 1 = ADP + phosphate + lipid A-core oligosaccharideSide 2.. Involved in lipopolysaccharide (LPS) biosynthesis. Translocates lipid A-core from the inner to the outer leaflet of the inner membrane. Transmembrane domains (TMD) form a pore in the inner membrane and the ATP-binding domain (NBD) is responsible for energy generation. This is ATP-dependent lipid A-core flippase from Methylobacillus flagellatus (strain ATCC 51484 / DSM 6875 / VKM B-1610 / KT).